Reading from the N-terminus, the 95-residue chain is Cell division protein FtsB (95 aa).

The Cytoplasmic segment spans residues 1–3 (MRW). The helical transmembrane segment at 4–21 (VLAGLTALLLWLQGLLWF) threads the bilayer. At 22–95 (GEGGLNDVRG…QIIEREDDAR (74 aa)) the chain is on the periplasmic side. The stretch at 26-76 (LNDVRGLSRSVEAQREEVDRLRQRNQALEAEVNDLKTGLEALEERARSELG) forms a coiled coil.

The protein belongs to the FtsB family. As to quaternary structure, part of a complex composed of FtsB, FtsL and FtsQ.

The protein resides in the cell inner membrane. In terms of biological role, essential cell division protein. May link together the upstream cell division proteins, which are predominantly cytoplasmic, with the downstream cell division proteins, which are predominantly periplasmic. This Alkalilimnicola ehrlichii (strain ATCC BAA-1101 / DSM 17681 / MLHE-1) protein is Cell division protein FtsB.